We begin with the raw amino-acid sequence, 183 residues long: ATP synthase subunit delta (183 aa).

The protein belongs to the ATPase delta chain family. As to quaternary structure, F-type ATPases have 2 components, F(1) - the catalytic core - and F(0) - the membrane proton channel. F(1) has five subunits: alpha(3), beta(3), gamma(1), delta(1), epsilon(1). F(0) has three main subunits: a(1), b(2) and c(10-14). The alpha and beta chains form an alternating ring which encloses part of the gamma chain. F(1) is attached to F(0) by a central stalk formed by the gamma and epsilon chains, while a peripheral stalk is formed by the delta and b chains.

Its subcellular location is the cell membrane. In terms of biological role, f(1)F(0) ATP synthase produces ATP from ADP in the presence of a proton or sodium gradient. F-type ATPases consist of two structural domains, F(1) containing the extramembraneous catalytic core and F(0) containing the membrane proton channel, linked together by a central stalk and a peripheral stalk. During catalysis, ATP synthesis in the catalytic domain of F(1) is coupled via a rotary mechanism of the central stalk subunits to proton translocation. Functionally, this protein is part of the stalk that links CF(0) to CF(1). It either transmits conformational changes from CF(0) to CF(1) or is implicated in proton conduction. In Halalkalibacterium halodurans (strain ATCC BAA-125 / DSM 18197 / FERM 7344 / JCM 9153 / C-125) (Bacillus halodurans), this protein is ATP synthase subunit delta.